The sequence spans 432 residues: Probable protein phosphatase 2C 33 (432 aa).

Residues 27–298 (GGGSERPLVR…DDTTCVVVDI (272 aa)) form the PPM-type phosphatase domain. Mn(2+) is bound by residues D74, G75, D250, and D289.

It belongs to the PP2C family. Mg(2+) serves as cofactor. It depends on Mn(2+) as a cofactor.

The enzyme catalyses O-phospho-L-seryl-[protein] + H2O = L-seryl-[protein] + phosphate. It catalyses the reaction O-phospho-L-threonyl-[protein] + H2O = L-threonyl-[protein] + phosphate. In Oryza sativa subsp. japonica (Rice), this protein is Probable protein phosphatase 2C 33.